A 465-amino-acid polypeptide reads, in one-letter code: MERYGGAGEDESRSDPSHEWSAQGTETGIEASMWRLGLRGGGGGGETFPERPDEPDCIYYLRTGVCGYGSRCRFNHPRNRAPVLGGLRTEAGEFPERMGQPVCQHFMRTGTCKFGASCKYHHPRQGGGGDSVTPVSLNYMGFPLRPGEKECSYFMRTGQCKFGSTCRYHHPVPPGVQAPSQQQQQQLSAGPTMYPSLQSQTVPSSQQYGVVLARPQLLPGSYVQSPYGYGQMVLPPGMVPYSGWNPYQASVSAMPSPGTQPSMGTSSVYGITPLSPSAPAYQSGPSSTGVSNKEQTFPQRPEQPECQYFMRTGDCKFGTSCRFHHPMEAASPEASTLSHIGLPLRPGAVPCTHFAQHGICKFGPACKFDHSLGSSSLSYSPSPSSLTDMPVAPYPSSLGTLAPSSSSDQCTELISSSSIEPITTTTGGSETVAAGVSSMTSDVSHPEPAETNKGDSASNEAKTSS.

A disordered region spans residues 1–26 (MERYGGAGEDESRSDPSHEWSAQGTE). 3 C3H1-type zinc fingers span residues 51–79 (RPDEPDCIYYLRTGVCGYGSRCRFNHPRN), 97–125 (RMGQPVCQHFMRTGTCKFGASCKYHHPRQ), and 145–173 (RPGEKECSYFMRTGQCKFGSTCRYHHPVP). 2 disordered regions span residues 173–200 (PPGVQAPSQQQQQQLSAGPTMYPSLQSQ) and 274–302 (LSPSAPAYQSGPSSTGVSNKEQTFPQRPE). Positions 177–191 (QAPSQQQQQQLSAGP) are enriched in low complexity. The span at 283 to 298 (SGPSSTGVSNKEQTFP) shows a compositional bias: polar residues. 2 consecutive C3H1-type zinc fingers follow at residues 300–328 (RPEQPECQYFMRTGDCKFGTSCRFHHPME) and 345–373 (RPGAVPCTHFAQHGICKFGPACKFDHSLG). Residues 397–431 (SLGTLAPSSSSDQCTELISSSSIEPITTTTGGSET) show a composition bias toward low complexity. The segment at 397–465 (SLGTLAPSSS…SASNEAKTSS (69 aa)) is disordered. Basic and acidic residues predominate over residues 444–453 (SHPEPAETNK). Positions 454–465 (GDSASNEAKTSS) are enriched in polar residues.

The protein localises to the nucleus. The protein is Zinc finger CCCH domain-containing protein 58 of Arabidopsis thaliana (Mouse-ear cress).